A 718-amino-acid polypeptide reads, in one-letter code: Ribosomal RNA large subunit methyltransferase K/L (718 aa).

A THUMP domain is found at 44–155; it reads DAYKVCIYSH…KQYVNVFLCL (112 aa).

Belongs to the methyltransferase superfamily. RlmKL family.

The protein localises to the cytoplasm. The catalysed reaction is guanosine(2445) in 23S rRNA + S-adenosyl-L-methionine = N(2)-methylguanosine(2445) in 23S rRNA + S-adenosyl-L-homocysteine + H(+). It carries out the reaction guanosine(2069) in 23S rRNA + S-adenosyl-L-methionine = N(2)-methylguanosine(2069) in 23S rRNA + S-adenosyl-L-homocysteine + H(+). In terms of biological role, specifically methylates the guanine in position 2445 (m2G2445) and the guanine in position 2069 (m7G2069) of 23S rRNA. The sequence is that of Ribosomal RNA large subunit methyltransferase K/L from Francisella philomiragia subsp. philomiragia (strain ATCC 25017 / CCUG 19701 / FSC 153 / O#319-036).